Reading from the N-terminus, the 586-residue chain is Mitochondrial tRNA methylthiotransferase CDK5RAP1 (586 aa).

The N-terminal 30 residues, 1–30 (MHPLQRVFRAQRLSAPLTSMCWVLLRTFRA), are a transit peptide targeting the mitochondrion. The tract at residues 68–90 (ASVPQEKPSSPEVEDPPPYLSGD) is disordered. An MTTase N-terminal domain is found at 97–217 (RKVYLETYGC…LPRLLAVVES (121 aa)). [4Fe-4S] cluster-binding residues include Cys-106, Cys-142, Cys-180, Cys-255, Cys-259, and Cys-262. In terms of domain architecture, Radical SAM core spans 241-495 (SPSATSAFVS…ITVFREEASK (255 aa)). Residues 498 to 573 (ATSVGCTQLV…SQTLKGHILC (76 aa)) form the TRAM domain.

Belongs to the methylthiotransferase family. MiaB subfamily. Interacts with CDK5R1 (p35 form). CDK5RAP1, CDK5RAP2 and CDK5RAP3 show competitive binding to CDK5R1. Forms a complex with CDK5R1 and CDK5. Requires [4Fe-4S] cluster as cofactor. In terms of tissue distribution, expressed in brain.

The protein localises to the mitochondrion inner membrane. The enzyme catalyses N(6)-dimethylallyladenosine(37) in tRNA + (sulfur carrier)-SH + AH2 + 2 S-adenosyl-L-methionine = 2-methylsulfanyl-N(6)-dimethylallyladenosine(37) in tRNA + (sulfur carrier)-H + 5'-deoxyadenosine + L-methionine + A + S-adenosyl-L-homocysteine + 2 H(+). Its function is as follows. Methylthiotransferase that catalyzes the conversion of N6-(dimethylallyl)adenosine (i(6)A) to 2-methylthio-N6-(dimethylallyl)adenosine (ms(2)i(6)A) at position 37 (adjacent to the 3'-end of the anticodon) of four mitochondrial DNA-encoded tRNAs (Ser(UCN), Phe, Tyr and Trp). Essential for efficient and highly accurate protein translation by the ribosome. Specifically inhibits CDK5 activation by CDK5R1. Essential for efficient mitochondrial protein synthesis and respiratory chain. In Rattus norvegicus (Rat), this protein is Mitochondrial tRNA methylthiotransferase CDK5RAP1 (Cdk5rap1).